Reading from the N-terminus, the 451-residue chain is PTS system cellobiose-specific EIIC component (451 aa).

The PTS EIIC type-3 domain maps to 8-423 (LEDRVMPVAG…FIAFAIYYPF (416 aa)). A run of 10 helical transmembrane segments spans residues 31 to 51 (GIIL…VGFL), 72 to 92 (LLYP…FGVA), 104 to 124 (LSAG…QVPF), 138 to 158 (GIPV…LAIV), 187 to 207 (FVAL…RLIL), 227 to 247 (LSVL…VQLL), 250 to 270 (TGLH…LSLM), 293 to 313 (FFDL…ALTM), 347 to 367 (IVMN…LVVV), and 407 to 427 (ILQI…FSIW).

It is found in the cell membrane. In terms of biological role, the phosphoenolpyruvate-dependent sugar phosphotransferase system (sugar PTS), a major carbohydrate active transport system, catalyzes the phosphorylation of incoming sugar substrates concomitantly with their translocation across the cell membrane. The enzyme II CelABD PTS system is involved in cellobiose transport. The polypeptide is PTS system cellobiose-specific EIIC component (Geobacillus stearothermophilus (Bacillus stearothermophilus)).